The sequence spans 269 residues: Formamidopyrimidine-DNA glycosylase (269 aa).

Residue Pro-2 is the Schiff-base intermediate with DNA of the active site. The active-site Proton donor is the Glu-3. Lys-57 serves as the catalytic Proton donor; for beta-elimination activity. Residues His-90, Arg-109, and Lys-150 each coordinate DNA. The segment at 235–269 (QVYGRKGEPCRVCGTPIVATKHAQRATFYCRHCQK) adopts an FPG-type zinc-finger fold. Arg-259 functions as the Proton donor; for delta-elimination activity in the catalytic mechanism.

It belongs to the FPG family. Monomer. Zn(2+) is required as a cofactor.

The catalysed reaction is Hydrolysis of DNA containing ring-opened 7-methylguanine residues, releasing 2,6-diamino-4-hydroxy-5-(N-methyl)formamidopyrimidine.. The enzyme catalyses 2'-deoxyribonucleotide-(2'-deoxyribose 5'-phosphate)-2'-deoxyribonucleotide-DNA = a 3'-end 2'-deoxyribonucleotide-(2,3-dehydro-2,3-deoxyribose 5'-phosphate)-DNA + a 5'-end 5'-phospho-2'-deoxyribonucleoside-DNA + H(+). Its function is as follows. Involved in base excision repair of DNA damaged by oxidation or by mutagenic agents. Acts as a DNA glycosylase that recognizes and removes damaged bases. Has a preference for oxidized purines, such as 7,8-dihydro-8-oxoguanine (8-oxoG). Has AP (apurinic/apyrimidinic) lyase activity and introduces nicks in the DNA strand. Cleaves the DNA backbone by beta-delta elimination to generate a single-strand break at the site of the removed base with both 3'- and 5'-phosphates. In Salmonella agona (strain SL483), this protein is Formamidopyrimidine-DNA glycosylase.